We begin with the raw amino-acid sequence, 155 residues long: Lectin-like protein EP153R (155 aa).

The Cytoplasmic segment spans residues 1–30; that stretch reads MYFKKKYIGLIDKNCEKKILDDCTTIKICY. Residues 31–51 traverse the membrane as a helical segment; sequence ILIGILIGTNMITLIYNFIFW. The Extracellular portion of the chain corresponds to 52-155; it reads DHYMTCNKKD…YLPLLFICSK (104 aa). Cys66 and Cys77 are oxidised to a cystine. Positions 66 to 154 are lectin-like; sequence CPKDWVGYNN…KYLPLLFICS (89 aa). Residues Asn82, Asn86, Asn98, Asn104, Asn110, Asn124, Asn130, and Asn137 are each glycosylated (N-linked (GlcNAc...) asparagine; by host). Cys94 and Cys153 are joined by a disulfide.

It belongs to the asfivirus lectin-like protein family. In terms of assembly, homodimer.

Its subcellular location is the host endoplasmic reticulum membrane. Functionally, down-regulates MHC-I expression by impairing the appropriate configuration or presentation into the plasma membrane of the latter. Participates in viral hemadsorption, which may help viral spread. Reduces the transactivating activity of host TP53, thus inhibiting apoptosis. Non-essential for virus growth in swine macrophage cell cultures. The polypeptide is Lectin-like protein EP153R (Ornithodoros (relapsing fever ticks)).